Here is a 277-residue protein sequence, read N- to C-terminus: Bifunctional protein FolD (277 aa).

NADP(+)-binding positions include 164-166 (GRS), Ser189, and Thr230.

It belongs to the tetrahydrofolate dehydrogenase/cyclohydrolase family. In terms of assembly, homodimer.

It catalyses the reaction (6R)-5,10-methylene-5,6,7,8-tetrahydrofolate + NADP(+) = (6R)-5,10-methenyltetrahydrofolate + NADPH. The catalysed reaction is (6R)-5,10-methenyltetrahydrofolate + H2O = (6R)-10-formyltetrahydrofolate + H(+). Its pathway is one-carbon metabolism; tetrahydrofolate interconversion. In terms of biological role, catalyzes the oxidation of 5,10-methylenetetrahydrofolate to 5,10-methenyltetrahydrofolate and then the hydrolysis of 5,10-methenyltetrahydrofolate to 10-formyltetrahydrofolate. The sequence is that of Bifunctional protein FolD from Clostridium perfringens (strain SM101 / Type A).